The sequence spans 90 residues: UPF0237 protein PAE3582 (90 aa).

The region spanning 5–74 (VVSVLGADRV…LEEEGKRLGV (70 aa)) is the ACT domain.

Belongs to the UPF0237 family.

In Pyrobaculum aerophilum (strain ATCC 51768 / DSM 7523 / JCM 9630 / CIP 104966 / NBRC 100827 / IM2), this protein is UPF0237 protein PAE3582.